We begin with the raw amino-acid sequence, 265 residues long: Glutamate racemase (265 aa).

Residues 12 to 13 (DS) and 44 to 45 (YG) contribute to the substrate site. The Proton donor/acceptor role is filled by C75. 76–77 (NT) contributes to the substrate binding site. The active-site Proton donor/acceptor is the C186. 187 to 188 (TH) lines the substrate pocket.

This sequence belongs to the aspartate/glutamate racemases family.

It catalyses the reaction L-glutamate = D-glutamate. The protein operates within cell wall biogenesis; peptidoglycan biosynthesis. Provides the (R)-glutamate required for cell wall biosynthesis. The chain is Glutamate racemase from Pseudomonas aeruginosa (strain UCBPP-PA14).